The chain runs to 416 residues: UDP-N-acetylmuramoylalanine--D-glutamate ligase (416 aa).

Position 104-110 (104-110 (GSNGKST)) interacts with ATP.

It belongs to the MurCDEF family.

The protein localises to the cytoplasm. It catalyses the reaction UDP-N-acetyl-alpha-D-muramoyl-L-alanine + D-glutamate + ATP = UDP-N-acetyl-alpha-D-muramoyl-L-alanyl-D-glutamate + ADP + phosphate + H(+). Its pathway is cell wall biogenesis; peptidoglycan biosynthesis. In terms of biological role, cell wall formation. Catalyzes the addition of glutamate to the nucleotide precursor UDP-N-acetylmuramoyl-L-alanine (UMA). In Francisella tularensis subsp. holarctica (strain FTNF002-00 / FTA), this protein is UDP-N-acetylmuramoylalanine--D-glutamate ligase.